The following is a 197-amino-acid chain: RNA pyrophosphohydrolase (197 aa).

Residues 6 to 150 (GYRPNVGIVI…KRDVYRKVMR (145 aa)) form the Nudix hydrolase domain. The Nudix box motif lies at 38-59 (GGINEGENIETAMYRELYEEVG).

This sequence belongs to the Nudix hydrolase family. RppH subfamily. The cofactor is a divalent metal cation.

In terms of biological role, accelerates the degradation of transcripts by removing pyrophosphate from the 5'-end of triphosphorylated RNA, leading to a more labile monophosphorylated state that can stimulate subsequent ribonuclease cleavage. The chain is RNA pyrophosphohydrolase from Haemophilus ducreyi (strain 35000HP / ATCC 700724).